Here is a 355-residue protein sequence, read N- to C-terminus: Daphnetin O-methyltransferase 1 (355 aa).

S-adenosyl-L-homocysteine is bound by residues aspartate 222, aspartate 242, and lysine 256. Histidine 260 serves as the catalytic Proton acceptor.

Belongs to the class I-like SAM-binding methyltransferase superfamily. Cation-independent O-methyltransferase family. COMT subfamily.

It catalyses the reaction 7,8-dihydroxycoumarin + S-adenosyl-L-methionine = 7-hydroxy-8-methoxycoumarin + S-adenosyl-L-homocysteine + H(+). It functions in the pathway aromatic compound metabolism. It participates in secondary metabolite biosynthesis. O-methyltransferase involved in the biosynthesis of coumarins natural products such as daphnetin derivatives. Catalyzes specifically the methylation of daphnetin (7,8-dihydroxycoumarin) to produce hydrangetin (7-hydroxy-8-methoxycoumarin). Probably involved in acclimation to low temperature conditions. In Secale cereale (Rye), this protein is Daphnetin O-methyltransferase 1.